The following is a 69-amino-acid chain: Sodium channel toxin (69 aa).

The LCN-type CS-alpha/beta domain occupies 2–66 (KNDYPVDTAK…SPTKTSGRCN (65 aa)). 4 cysteine pairs are disulfide-bonded: Cys14-Cys65, Cys18-Cys41, Cys27-Cys48, and Cys31-Cys50.

The protein belongs to the long (4 C-C) scorpion toxin superfamily. Sodium channel inhibitor family. In terms of tissue distribution, expressed by the venom gland.

It is found in the secreted. Functionally, inhibits voltage-gated sodium channels (Nav). This chain is Sodium channel toxin, found in Tityus metuendus (Scorpion).